The following is a 360-amino-acid chain: Phosphoserine aminotransferase (360 aa).

Residue arginine 41 participates in L-glutamate binding. Pyridoxal 5'-phosphate is bound by residues 75–76 (AS), tryptophan 101, threonine 151, aspartate 171, and glutamine 194. N6-(pyridoxal phosphate)lysine is present on lysine 195. 236 to 237 (NT) contacts pyridoxal 5'-phosphate.

This sequence belongs to the class-V pyridoxal-phosphate-dependent aminotransferase family. SerC subfamily. As to quaternary structure, homodimer. Requires pyridoxal 5'-phosphate as cofactor.

The protein localises to the cytoplasm. The enzyme catalyses O-phospho-L-serine + 2-oxoglutarate = 3-phosphooxypyruvate + L-glutamate. It catalyses the reaction 4-(phosphooxy)-L-threonine + 2-oxoglutarate = (R)-3-hydroxy-2-oxo-4-phosphooxybutanoate + L-glutamate. Its pathway is amino-acid biosynthesis; L-serine biosynthesis; L-serine from 3-phospho-D-glycerate: step 2/3. It functions in the pathway cofactor biosynthesis; pyridoxine 5'-phosphate biosynthesis; pyridoxine 5'-phosphate from D-erythrose 4-phosphate: step 3/5. Catalyzes the reversible conversion of 3-phosphohydroxypyruvate to phosphoserine and of 3-hydroxy-2-oxo-4-phosphonooxybutanoate to phosphohydroxythreonine. The chain is Phosphoserine aminotransferase from Herpetosiphon aurantiacus (strain ATCC 23779 / DSM 785 / 114-95).